We begin with the raw amino-acid sequence, 1367 residues long: DNA polymerase III PolC-type (1367 aa).

The Exonuclease domain occupies 358-513 (FVVLDFETTG…DDARVTAQVF (156 aa)).

Belongs to the DNA polymerase type-C family. PolC subfamily.

Its subcellular location is the cytoplasm. The enzyme catalyses DNA(n) + a 2'-deoxyribonucleoside 5'-triphosphate = DNA(n+1) + diphosphate. Required for replicative DNA synthesis. This DNA polymerase also exhibits 3' to 5' exonuclease activity. This Thermotoga maritima (strain ATCC 43589 / DSM 3109 / JCM 10099 / NBRC 100826 / MSB8) protein is DNA polymerase III PolC-type.